We begin with the raw amino-acid sequence, 330 residues long: MKKSYIEKQQQISFVKAHFSRQLEQRLGLIEVQAPILSRLGDGTQDNLSGHEKAVQVKVKNLPQDAFEVVHSLAKWKRKTLGMYDFAPGEGLYTHMKALRPDEDRLSAIHSVYVDQWDWERVMGDGERTPAYLQETVRHIYAAMKTTEAEVCAQYGLTPFLPAEIHFIHSEALLRRYPDLDAKGRERAITHELGAVFLIGIGGRLSNGQAHDVRAPDYDDWTSLGAEGFGGLNGDILVWNPVLGDAFELSSMGIRVDAKALKRQLALTDDEDRLALEWHQSLLRGDMPQTIGGGIGQSRLVMLLLQQQHIGQVQCGVWPQEIRQRVQAIL.

Belongs to the class-II aminoacyl-tRNA synthetase family. AsnA subfamily.

It is found in the cytoplasm. The enzyme catalyses L-aspartate + NH4(+) + ATP = L-asparagine + AMP + diphosphate + H(+). The protein operates within amino-acid biosynthesis; L-asparagine biosynthesis; L-asparagine from L-aspartate (ammonia route): step 1/1. The polypeptide is Aspartate--ammonia ligase (Edwardsiella ictaluri (strain 93-146)).